A 503-amino-acid polypeptide reads, in one-letter code: Probable cytosol aminopeptidase (503 aa).

Mn(2+)-binding residues include Lys270 and Asp275. Lys282 is a catalytic residue. 3 residues coordinate Mn(2+): Asp293, Asp352, and Glu354. Arg356 is a catalytic residue.

This sequence belongs to the peptidase M17 family. Requires Mn(2+) as cofactor.

The protein resides in the cytoplasm. It carries out the reaction Release of an N-terminal amino acid, Xaa-|-Yaa-, in which Xaa is preferably Leu, but may be other amino acids including Pro although not Arg or Lys, and Yaa may be Pro. Amino acid amides and methyl esters are also readily hydrolyzed, but rates on arylamides are exceedingly low.. It catalyses the reaction Release of an N-terminal amino acid, preferentially leucine, but not glutamic or aspartic acids.. In terms of biological role, presumably involved in the processing and regular turnover of intracellular proteins. Catalyzes the removal of unsubstituted N-terminal amino acids from various peptides. The chain is Probable cytosol aminopeptidase from Erwinia tasmaniensis (strain DSM 17950 / CFBP 7177 / CIP 109463 / NCPPB 4357 / Et1/99).